Reading from the N-terminus, the 160-residue chain is MKIYIQPLSVNSHTVEVLANSLPKIFNAEVFVLPASDVSLKCYNASRRQYNSTCILRMLPPIKVTLGVTGKDIYAKGMNFVFGEAELGGARAVLSVFRLTTADSELYRERVVKEAVHEIGHVLGLKHCSNNCVMRFSNSVQDVDRKPVSFCRECASKIRY.

H117 contacts Zn(2+). E118 (proton acceptor) is an active-site residue. H121, H127, C128, C132, C151, and C154 together coordinate Zn(2+).

This sequence belongs to the peptidase M54 family. As to quaternary structure, monomer. It depends on Zn(2+) as a cofactor.

Functionally, probable zinc metalloprotease whose natural substrate is unknown. The chain is Archaemetzincin from Archaeoglobus fulgidus (strain ATCC 49558 / DSM 4304 / JCM 9628 / NBRC 100126 / VC-16).